The following is a 47-amino-acid chain: Conotoxin Cal6.18 (47 aa).

Positions 1–19 are cleaved as a signal peptide; the sequence is MKLTYVLIVAMLVLVVCRA.

This sequence belongs to the conotoxin O1 superfamily. In terms of processing, may contain 3 disulfide bonds. As to expression, expressed by the venom duct.

The protein resides in the secreted. In terms of biological role, probable neurotoxin. In Californiconus californicus (California cone), this protein is Conotoxin Cal6.18.